The sequence spans 163 residues: Probable ribosome biogenesis protein RLP24 (163 aa).

The protein belongs to the eukaryotic ribosomal protein eL24 family. As to quaternary structure, associated with nucleolar and cytoplasmic pre-60S particles. At the end of biogenesis it dissociates from cytoplasmic pre-60S particles and is likely to be exchanged for its ribosomal homolog, RPL24.

The protein resides in the nucleus. It localises to the nucleolus. Functionally, involved in the biogenesis of the 60S ribosomal subunit. Ensures the docking of GTPBP4/NOG1 to pre-60S particles. This Pongo abelii (Sumatran orangutan) protein is Probable ribosome biogenesis protein RLP24 (RSL24D1).